The primary structure comprises 391 residues: D-xylose 1-dehydrogenase (NADP(+)) (391 aa).

The protein belongs to the Gfo/Idh/MocA family.

It carries out the reaction D-xylose + NADP(+) = D-xylono-1,5-lactone + NADPH + H(+). Its function is as follows. NADP-dependent D-xylose dehydrogenase catalyzing the oxydation of D-xylose into D-xylonolactone. Also displays some, albeit lower activity with D-glucose, D-galactose and L-arabinose as substrate. Probably not involved in D-xylose degradation, as it has been shown that H.jecorina assimilates D-xylose via D-xylose reductase and xylitol dehydrogenase, and it is unable to grow on D-xylonic acid as sole carbon source. May play a role in the regeneration of NADP(+) in the presence of D-xylose. This Hypocrea jecorina (strain ATCC 56765 / BCRC 32924 / NRRL 11460 / Rut C-30) (Trichoderma reesei) protein is D-xylose 1-dehydrogenase (NADP(+)).